We begin with the raw amino-acid sequence, 154 residues long: UPF0178 protein SPO3827 (154 aa).

It belongs to the UPF0178 family.

This chain is UPF0178 protein SPO3827, found in Ruegeria pomeroyi (strain ATCC 700808 / DSM 15171 / DSS-3) (Silicibacter pomeroyi).